Reading from the N-terminus, the 244-residue chain is Probable transcriptional regulatory protein CBU_1566 (244 aa).

The protein belongs to the TACO1 family.

It is found in the cytoplasm. The sequence is that of Probable transcriptional regulatory protein CBU_1566 from Coxiella burnetii (strain RSA 493 / Nine Mile phase I).